The sequence spans 223 residues: Putative germin-like protein 2-2 (223 aa).

The N-terminal stretch at 1–28 (MAAVGACFLQQLAVVALLALWCSHGAIA) is a signal peptide. Cys38 and Cys53 are oxidised to a cystine. The Cupin type-1 domain maps to 67–217 (SGLHMAGNTT…AFQVDKNIID (151 aa)). N-linked (GlcNAc...) asparagine glycosylation is found at Asn74 and Asn82. Residues His115, His117, Glu122, and His163 each contribute to the Mn(2+) site. N-linked (GlcNAc...) asparagine glycosylation is present at Asn168.

It belongs to the germin family. As to quaternary structure, oligomer (believed to be a pentamer but probably hexamer).

It localises to the secreted. The protein resides in the extracellular space. It is found in the apoplast. May play a role in plant defense. Probably has no oxalate oxidase activity even if the active site is conserved. This chain is Putative germin-like protein 2-2, found in Oryza sativa subsp. japonica (Rice).